The sequence spans 262 residues: Ribosome-recycling factor, mitochondrial (262 aa).

The transit peptide at 1–55 (MALGLRCFRLVHPAFCNSLAALTRPVSEVTLQTVRGRQNDHGQCMAYAAVPVRHF) directs the protein to the mitochondrion.

It belongs to the RRF family.

The protein localises to the mitochondrion. Functionally, responsible for the disassembly of ribosomes from messenger RNA at the termination of mitochondrial protein biosynthesis. Acts in collaboration with GFM2. Promotes mitochondrial ribosome recycling by dissolution of intersubunit contacts. This chain is Ribosome-recycling factor, mitochondrial (MRRF), found in Bos taurus (Bovine).